A 193-amino-acid polypeptide reads, in one-letter code: Cysteine and glycine-rich protein 1 (193 aa).

The 52-residue stretch at 10 to 61 folds into the LIM zinc-binding 1 domain; that stretch reads CGVCQKTVYFAEEVQCEGNSFHKSCFLCMVCKKNLDSTTVAVHGEEIYCKSC. The Nuclear localization signal motif lies at 64 to 69; the sequence is KKYGPK. Serine 81 is subject to Phosphoserine. An N6-acetyllysine modification is found at lysine 84. Residue lysine 91 forms a Glycyl lysine isopeptide (Lys-Gly) (interchain with G-Cter in SUMO2) linkage. N6-acetyllysine is present on residues lysine 112, lysine 131, lysine 137, and lysine 161. In terms of domain architecture, LIM zinc-binding 2 spans 119 to 170; sequence CPRCSQAVYAAEKVIGAGKSWHKSCFRCAKCGKGLESTTLADKDGEIYCKGC. Phosphoserine is present on serine 192.

As to quaternary structure, interacts with ASCC1; ASCC2 and TRIP4.

It localises to the nucleus. In terms of biological role, could play a role in neuronal development. This is Cysteine and glycine-rich protein 1 (Csrp1) from Rattus norvegicus (Rat).